The following is a 372-amino-acid chain: Glutamate 5-kinase (372 aa).

Residue K14 coordinates ATP. Residues S54, D141, and N153 each coordinate substrate. 173-174 (TD) provides a ligand contact to ATP. The PUA domain occupies 280–358 (RGTLTLDEGA…DEIEKLLGYV (79 aa)).

This sequence belongs to the glutamate 5-kinase family.

The protein resides in the cytoplasm. It catalyses the reaction L-glutamate + ATP = L-glutamyl 5-phosphate + ADP. Its pathway is amino-acid biosynthesis; L-proline biosynthesis; L-glutamate 5-semialdehyde from L-glutamate: step 1/2. Functionally, catalyzes the transfer of a phosphate group to glutamate to form L-glutamate 5-phosphate. The sequence is that of Glutamate 5-kinase from Stutzerimonas stutzeri (strain A1501) (Pseudomonas stutzeri).